The chain runs to 446 residues: Tubulin alpha chain-like 3 (446 aa).

An MREC motif motif is present at residues 1–4 (MREC). GTP is bound by residues Gln-11, Glu-78, Ser-147, Gly-151, Thr-152, Thr-186, Asn-213, and Asn-235. Glu-78 is a binding site for Mg(2+). Glu-261 is an active-site residue.

It belongs to the tubulin family. Dimer of alpha and beta chains. A typical microtubule is a hollow water-filled tube with an outer diameter of 25 nm and an inner diameter of 15 nM. Alpha-beta heterodimers associate head-to-tail to form protofilaments running lengthwise along the microtubule wall with the beta-tubulin subunit facing the microtubule plus end conferring a structural polarity. Microtubules usually have 13 protofilaments but different protofilament numbers can be found in some organisms and specialized cells. Requires Mg(2+) as cofactor. In terms of processing, some glutamate residues at the C-terminus are polyglutamylated, resulting in polyglutamate chains on the gamma-carboxyl group. Polyglutamylation plays a key role in microtubule severing by spastin (SPAST). SPAST preferentially recognizes and acts on microtubules decorated with short polyglutamate tails: severing activity by SPAST increases as the number of glutamates per tubulin rises from one to eight, but decreases beyond this glutamylation threshold. Glutamylation is also involved in cilia motility. Some glutamate residues at the C-terminus are monoglycylated but not polyglycylated due to the absence of functional TTLL10 in human. Monoglycylation is mainly limited to tubulin incorporated into cilia and flagella axonemes, which is required for their stability and maintenance. Flagella glycylation controls sperm motility. Both polyglutamylation and monoglycylation can coexist on the same protein on adjacent residues, and lowering glycylation levels increases polyglutamylation, and reciprocally.

The protein resides in the cytoplasm. It localises to the cytoskeleton. It catalyses the reaction GTP + H2O = GDP + phosphate + H(+). Its function is as follows. Tubulin is the major constituent of microtubules, a cylinder consisting of laterally associated linear protofilaments composed of alpha- and beta-tubulin heterodimers. Microtubules grow by the addition of GTP-tubulin dimers to the microtubule end, where a stabilizing cap forms. Below the cap, tubulin dimers are in GDP-bound state, owing to GTPase activity of alpha-tubulin. This chain is Tubulin alpha chain-like 3 (TUBAL3), found in Homo sapiens (Human).